A 38-amino-acid polypeptide reads, in one-letter code: Photosystem II reaction center protein M (38 aa).

Residues 7–27 (GFVASILFVLVPTVFLLILYI) form a helical membrane-spanning segment.

Belongs to the PsbM family. In terms of assembly, PSII is composed of 1 copy each of membrane proteins PsbA, PsbB, PsbC, PsbD, PsbE, PsbF, PsbH, PsbI, PsbJ, PsbK, PsbL, PsbM, PsbT, PsbX, PsbY, PsbZ, Psb30/Ycf12, peripheral proteins PsbO, CyanoQ (PsbQ), PsbU, PsbV and a large number of cofactors. It forms dimeric complexes.

It localises to the cellular thylakoid membrane. In terms of biological role, one of the components of the core complex of photosystem II (PSII). PSII is a light-driven water:plastoquinone oxidoreductase that uses light energy to abstract electrons from H(2)O, generating O(2) and a proton gradient subsequently used for ATP formation. It consists of a core antenna complex that captures photons, and an electron transfer chain that converts photonic excitation into a charge separation. This subunit is found at the monomer-monomer interface. The protein is Photosystem II reaction center protein M of Nostoc punctiforme (strain ATCC 29133 / PCC 73102).